The following is a 146-amino-acid chain: D-aminoacyl-tRNA deacylase (146 aa).

Positions 137-138 (GP) match the Gly-cisPro motif, important for rejection of L-amino acids motif.

The protein belongs to the DTD family. As to quaternary structure, homodimer.

The protein resides in the cytoplasm. It carries out the reaction glycyl-tRNA(Ala) + H2O = tRNA(Ala) + glycine + H(+). The catalysed reaction is a D-aminoacyl-tRNA + H2O = a tRNA + a D-alpha-amino acid + H(+). In terms of biological role, an aminoacyl-tRNA editing enzyme that deacylates mischarged D-aminoacyl-tRNAs. Also deacylates mischarged glycyl-tRNA(Ala), protecting cells against glycine mischarging by AlaRS. Acts via tRNA-based rather than protein-based catalysis; rejects L-amino acids rather than detecting D-amino acids in the active site. By recycling D-aminoacyl-tRNA to D-amino acids and free tRNA molecules, this enzyme counteracts the toxicity associated with the formation of D-aminoacyl-tRNA entities in vivo and helps enforce protein L-homochirality. The protein is D-aminoacyl-tRNA deacylase of Cellvibrio japonicus (strain Ueda107) (Pseudomonas fluorescens subsp. cellulosa).